A 121-amino-acid chain; its full sequence is Small ribosomal subunit protein uS13 (121 aa).

Residues His-91–Lys-121 are disordered. Basic residues predominate over residues Gln-100–Lys-121.

The protein belongs to the universal ribosomal protein uS13 family. Part of the 30S ribosomal subunit. Forms a loose heterodimer with protein S19. Forms two bridges to the 50S subunit in the 70S ribosome.

Functionally, located at the top of the head of the 30S subunit, it contacts several helices of the 16S rRNA. In the 70S ribosome it contacts the 23S rRNA (bridge B1a) and protein L5 of the 50S subunit (bridge B1b), connecting the 2 subunits; these bridges are implicated in subunit movement. Contacts the tRNAs in the A and P-sites. The protein is Small ribosomal subunit protein uS13 of Prochlorococcus marinus (strain SARG / CCMP1375 / SS120).